We begin with the raw amino-acid sequence, 735 residues long: Catalase-peroxidase (735 aa).

Over residues methionine 1–glycine 10 the composition is skewed to polar residues. The interval methionine 1–serine 20 is disordered. The tryptophyl-tyrosyl-methioninium (Trp-Tyr) (with M-254) cross-link spans tryptophan 100–tyrosine 228. The active-site Proton acceptor is the histidine 101. The segment at residues tyrosine 228–methionine 254 is a cross-link (tryptophyl-tyrosyl-methioninium (Tyr-Met) (with W-100)). Position 269 (histidine 269) interacts with heme b.

This sequence belongs to the peroxidase family. Peroxidase/catalase subfamily. Homodimer or homotetramer. The cofactor is heme b. Formation of the three residue Trp-Tyr-Met cross-link is important for the catalase, but not the peroxidase activity of the enzyme.

It catalyses the reaction H2O2 + AH2 = A + 2 H2O. The enzyme catalyses 2 H2O2 = O2 + 2 H2O. In terms of biological role, bifunctional enzyme with both catalase and broad-spectrum peroxidase activity. This chain is Catalase-peroxidase, found in Jannaschia sp. (strain CCS1).